Consider the following 185-residue polypeptide: Threonylcarbamoyl-AMP synthase (185 aa).

Residues 4–185 enclose the YrdC-like domain; that stretch reads SWRVQQAARE…LATGKVVRPS (182 aa).

The protein belongs to the SUA5 family. TsaC subfamily.

It localises to the cytoplasm. The catalysed reaction is L-threonine + hydrogencarbonate + ATP = L-threonylcarbamoyladenylate + diphosphate + H2O. Required for the formation of a threonylcarbamoyl group on adenosine at position 37 (t(6)A37) in tRNAs that read codons beginning with adenine. Catalyzes the conversion of L-threonine, HCO(3)(-)/CO(2) and ATP to give threonylcarbamoyl-AMP (TC-AMP) as the acyladenylate intermediate, with the release of diphosphate. This chain is Threonylcarbamoyl-AMP synthase, found in Pseudomonas fluorescens (strain ATCC BAA-477 / NRRL B-23932 / Pf-5).